We begin with the raw amino-acid sequence, 247 residues long: MTILFLTMVISYFGCMKAAPMKEANVRGQGSLAYPGVRTHGTLESVNGPKAGSRGLTSLADTFEHVIEELLDEDQKVRPSEENNKDADLYTSRVMLSSQVPLEPPLLFLLEEYKNYLDAANMSMRVRRHSDPARRGELSVCDSISEWVTAADKKTAVDMSGGTVTVLEKVPVSKGQLKQYFYETKCNPMGYTKEGCRGIDKRHWNSQCRTTQSYVRALTMDSKKRIGWRFIRIDTSCVCTLTIKRGR.

An N-terminal signal peptide occupies residues 1-18 (MTILFLTMVISYFGCMKA). Positions 19–128 (APMKEANVRG…AANMSMRVRR (110 aa)) are excised as a propeptide. An N-linked (GlcNAc...) asparagine glycan is attached at N121. Intrachain disulfides connect C141-C208, C186-C237, and C196-C239.

It belongs to the NGF-beta family. Monomers and homodimers. Binds to NTRK2/TRKB. Can form heterodimers with other neurotrophin family members, such as NTF3 and NTF4 (in vitro), but the physiological relevance of this is not clear. BDNF precursor form: interacts with the heterodimer formed by NGFR and SORCS2. Mature BDNF has much lower affinity for the heterodimer formed by NGFR and SORCS2. N-glycosylated and glycosulfated, contrary to mature BDNF. Post-translationally, mature BDNF is produced by proteolytic removal of the propeptide, catalyzed by a FURIN family member. In addition, the precursor form is proteolytically cleaved within the propeptide, but this is not an obligatory intermediate for the production of mature BDNF. Can be converted into mature BDNF by plasmin (PLG).

It localises to the secreted. Functionally, important signaling molecule that activates signaling cascades downstream of NTRK2. During development, promotes the survival and differentiation of selected neuronal populations of the peripheral and central nervous systems. Participates in axonal growth, pathfinding and in the modulation of dendritic growth and morphology. Major regulator of synaptic transmission and plasticity at adult synapses in many regions of the CNS. The versatility of BDNF is emphasized by its contribution to a range of adaptive neuronal responses including long-term potentiation (LTP), long-term depression (LTD), certain forms of short-term synaptic plasticity, as well as homeostatic regulation of intrinsic neuronal excitability. In terms of biological role, important signaling molecule that activates signaling cascades downstream of NTRK2. Activates signaling cascades via the heterodimeric receptor formed by NGFR and SORCS2. Signaling via NGFR and SORCS2 plays a role in synaptic plasticity and long-term depression (LTD). Binding to NGFR and SORCS2 promotes neuronal apoptosis. Promotes neuronal growth cone collapse. This Helarctos malayanus (Malayan sun bear) protein is Neurotrophic factor BDNF precursor form (BDNF).